We begin with the raw amino-acid sequence, 341 residues long: Glyceraldehyde-3-phosphate dehydrogenase 1 (341 aa).

NAD(+)-binding positions include 13–14 (RI), D35, and K85. D-glyceraldehyde 3-phosphate contacts are provided by residues 157–159 (SCT), T188, 217–218 (TG), and R240. C158 (nucleophile) is an active-site residue. N322 is a binding site for NAD(+).

Belongs to the glyceraldehyde-3-phosphate dehydrogenase family. Homotetramer.

It is found in the cytoplasm. It carries out the reaction D-glyceraldehyde 3-phosphate + phosphate + NAD(+) = (2R)-3-phospho-glyceroyl phosphate + NADH + H(+). It participates in carbohydrate degradation; glycolysis; pyruvate from D-glyceraldehyde 3-phosphate: step 1/5. The polypeptide is Glyceraldehyde-3-phosphate dehydrogenase 1 (gpd-1) (Caenorhabditis elegans).